Consider the following 554-residue polypeptide: Beta-eudesmol synthase (554 aa).

Positions 305, 309, and 456 each coordinate Mg(2+). The DDXXD motif signature appears at 305–309 (DDIYD).

This sequence belongs to the terpene synthase family. Mg(2+) serves as cofactor. Mn(2+) is required as a cofactor. Expressed in rhizomes. Detected in stems, but not in leaves.

The protein localises to the cytoplasm. The enzyme catalyses (2E,6E)-farnesyl diphosphate + H2O = beta-eudesmol + diphosphate. It carries out the reaction (2E,6E)-farnesyl diphosphate + H2O = 10-epi-gamma-eudesmol + diphosphate. It catalyses the reaction (2E,6E)-farnesyl diphosphate + H2O = alpha-eudesmol + diphosphate. It participates in secondary metabolite biosynthesis; terpenoid biosynthesis. Functionally, involved in the biosynthesis of beta-eudesmol, a sesquiterpene with antifungal activity and responsible for resistance of plants to ant attack. Produces mainly beta-eudesmol, but also smaller amounts of 10-epi-gamma-eudesmol, alpha-eudesmol and aristolene. In Zingiber zerumbet (Shampoo ginger), this protein is Beta-eudesmol synthase (ZSS2).